A 122-amino-acid polypeptide reads, in one-letter code: MARIAGVNIPTNKRVLIALQYIHGIGQKIAGEILEKVKIPVDRRVSQLSDAEVLQIREVIDRDYLVEGDLRREVGINIKRLMDLGCYRGLRHRRGLPVRGQRTHTNARTRKGPAKAIAGKKK.

The tract at residues 99–122 (RGQRTHTNARTRKGPAKAIAGKKK) is disordered.

This sequence belongs to the universal ribosomal protein uS13 family. Part of the 30S ribosomal subunit. Forms a loose heterodimer with protein S19. Forms two bridges to the 50S subunit in the 70S ribosome.

Functionally, located at the top of the head of the 30S subunit, it contacts several helices of the 16S rRNA. In the 70S ribosome it contacts the 23S rRNA (bridge B1a) and protein L5 of the 50S subunit (bridge B1b), connecting the 2 subunits; these bridges are implicated in subunit movement. Contacts the tRNAs in the A and P-sites. The polypeptide is Small ribosomal subunit protein uS13 (Bradyrhizobium diazoefficiens (strain JCM 10833 / BCRC 13528 / IAM 13628 / NBRC 14792 / USDA 110)).